A 510-amino-acid chain; its full sequence is Flavonoid 3',5'-hydroxylase (510 aa).

Residue C447 coordinates heme.

This sequence belongs to the cytochrome P450 family. It depends on heme as a cofactor.

The catalysed reaction is a 3',5'-unsubstituted flavanone + 2 reduced [NADPH--hemoprotein reductase] + 2 O2 = a 3',5'-dihydroxyflavanone + 2 oxidized [NADPH--hemoprotein reductase] + 2 H2O + 2 H(+). It functions in the pathway pigment biosynthesis; anthocyanin biosynthesis. Catalyzes the 3'5'-hydroxylation of naringenin and eriodictyol to form 5,7,3,'4',5'-pentahydroxyflavanone and 3',5'-hydroxylation of dihydrokaempferol and dihydroquercetin to form dihydromyricetin. This Eustoma exaltatum subsp. russellianum (Bluebells) protein is Flavonoid 3',5'-hydroxylase (CYP75A7).